Here is a 2297-residue protein sequence, read N- to C-terminus: Xin actin-binding repeat-containing protein 1 (2297 aa).

The span at 1–11 (MAEVAKQKKAT) shows a compositional bias: basic and acidic residues. Residues 1–28 (MAEVAKQKKATEAVCGDEDFPPPPPPLP) form a disordered region. 9 Xin repeats span residues 104 to 119 (GEVQ…WTLD), 139 to 154 (GDVK…STFD), 169 to 184 (GDVR…QPLD), 208 to 223 (GDVT…KPLD), 248 to 263 (GDVK…DPCC), 286 to 301 (SDFK…QPLD), 323 to 338 (GGVD…QPLD), 362 to 377 (ADVH…QPLS), and 396 to 411 (GNVG…QPMD). The segment covering 433–442 (GEVQDKRMQF) has biased composition (basic and acidic residues). Residues 433–461 (GEVQDKRMQFEKSTAGKTAGDSGNKVQND) form a disordered region. Xin repeat units lie at residues 464 to 479 (GDVK…LPLN), 494 to 509 (GDVK…TPLY), 532 to 547 (GNVQ…RPLD), 570 to 585 (DDTR…QPLD), 605 to 620 (SNVK…KPMD), 638 to 653 (ADVK…QPLD), 677 to 692 (VNVK…EPLD), 715 to 730 (GDVS…KSLG), 747 to 762 (GSVH…QPIG), 779 to 794 (GDVG…LSLD), 818 to 833 (VNVK…QPLY), 856 to 871 (GDVR…KPLD), 893 to 908 (GDVK…QPLD), and 928 to 943 (KCVQ…EQAS). Ser952 is modified (phosphoserine). Xin repeat units lie at residues 959–974 (GDVR…QPID), 997–1012 (GDVK…QSLD), and 1033–1048 (ADVK…TPLD). Disordered stretches follow at residues 1617 to 1680 (PSSH…KDQK), 1866 to 1900 (KENI…VPSI), 2147 to 2191 (SAAR…PRRK), and 2243 to 2297 (ELSS…TEKH). 2 stretches are compositionally biased toward low complexity: residues 1618 to 1630 (SSHT…VSVT) and 1644 to 1656 (SVSS…KNSS). Composition is skewed to basic and acidic residues over residues 1876–1885 (SNKDELHFTS) and 2151–2162 (KPAESPTDKPKT). A compositionally biased stretch (low complexity) spans 2166–2180 (QSNAGSSSSQNSSAS). The segment covering 2259–2278 (GMTSPVLQRSGQSFSSNSLS) has biased composition (polar residues).

The protein belongs to the Xin family. Expressed at intercalated disks in the heart (at protein level).

It is found in the cell junction. Its subcellular location is the adherens junction. It localises to the desmosome. Functionally, positively regulates organization of the outer plexiform layer and Muller glia cells in the retina. May protect actin filaments from depolymerization. May play a role in development of normal skeletal muscle morphology and muscle fiber type composition. This chain is Xin actin-binding repeat-containing protein 1, found in Danio rerio (Zebrafish).